Here is a 488-residue protein sequence, read N- to C-terminus: Tetratricopeptide repeat protein 23 (488 aa).

TPR repeat units lie at residues 45-78 (LHLC…TRIC), 137-170 (LELF…SKEM), 186-219 (SRIK…TEIT), 228-261 (VQVL…TPQP), and 398-431 (AETY…ETFL).

As to quaternary structure, associated with the EvC complex composed of EFCAB7, IQCE, EVC2 and EVC.

It is found in the cell projection. It localises to the cilium. Its function is as follows. Participates positively in the ciliary Hedgehog (Hh) signaling. The sequence is that of Tetratricopeptide repeat protein 23 (Ttc23) from Mus musculus (Mouse).